The primary structure comprises 274 residues: NH(3)-dependent NAD(+) synthetase (274 aa).

46-53 (GISGGQDS) is a binding site for ATP. Asp52 lines the Mg(2+) pocket. Arg140 contributes to the deamido-NAD(+) binding site. ATP is bound at residue Thr160. Glu165 serves as a coordination point for Mg(2+). Deamido-NAD(+) is bound by residues Lys173 and Asp180. ATP contacts are provided by Lys189 and Thr211. Residue 260–261 (HK) participates in deamido-NAD(+) binding.

Belongs to the NAD synthetase family. In terms of assembly, homodimer.

The enzyme catalyses deamido-NAD(+) + NH4(+) + ATP = AMP + diphosphate + NAD(+) + H(+). Its pathway is cofactor biosynthesis; NAD(+) biosynthesis; NAD(+) from deamido-NAD(+) (ammonia route): step 1/1. In terms of biological role, catalyzes the ATP-dependent amidation of deamido-NAD to form NAD. Uses ammonia as a nitrogen source. This Streptococcus equi subsp. zooepidemicus (strain H70) protein is NH(3)-dependent NAD(+) synthetase.